Consider the following 463-residue polypeptide: Probable multidrug resistance protein YoeA (463 aa).

The next 12 helical transmembrane spans lie at 24-44 (LFLVPLLLSNVLQSVGQLVGM), 56-76 (VAAVSSFFPLFFLLISFTIGI), 106-126 (FTFLLGVVLAVIGSIFTLDIL), 143-163 (ARILFYAMPFMFLYFAYTTFL), 177-197 (IVSTVINIALLPVLILGMFGF), 202-222 (IYGSAYATVISTIATFLVLMV), 256-276 (VPASINMILVSLSEIAVISFV), 293-313 (VASYVQMPAVSLGIAVSIFAA), 330-350 (VGIWLNYIIGGVLIILIYVFS), 370-390 (LLMITLWSYLLFGNAQIISAT), 397-417 (VLWPTVISIFAIWGVEVPVAF), and 427-447 (ILGVWVGYPAAFAVSLLLIYG).

Belongs to the multi antimicrobial extrusion (MATE) (TC 2.A.66.1) family.

It localises to the cell membrane. This Bacillus subtilis (strain 168) protein is Probable multidrug resistance protein YoeA (yoeA).